Here is a 456-residue protein sequence, read N- to C-terminus: Bifunctional protein GlmU (456 aa).

A pyrophosphorylase region spans residues 1–229 (MLNNAMSVVI…LSEVEGVNNR (229 aa)). Residues 11–14 (LAAG), Lys-25, Gln-76, 81–82 (GT), 103–105 (YGD), Gly-140, Glu-154, Asn-169, and Asn-227 contribute to the UDP-N-acetyl-alpha-D-glucosamine site. Asp-105 is a binding site for Mg(2+). Mg(2+) is bound at residue Asn-227. A linker region spans residues 230–250 (LQLSRLERVYQSEQAEKLLLA). Positions 251 to 456 (GVMLRDPARF…EGWRRPVKKK (206 aa)) are N-acetyltransferase. UDP-N-acetyl-alpha-D-glucosamine contacts are provided by Arg-333 and Lys-351. Catalysis depends on His-363, which acts as the Proton acceptor. The UDP-N-acetyl-alpha-D-glucosamine site is built by Tyr-366 and Asn-377. Residues Ala-380, 386 to 387 (NY), Ser-405, Ala-423, and Arg-440 contribute to the acetyl-CoA site.

This sequence in the N-terminal section; belongs to the N-acetylglucosamine-1-phosphate uridyltransferase family. In the C-terminal section; belongs to the transferase hexapeptide repeat family. Homotrimer. The cofactor is Mg(2+).

The protein resides in the cytoplasm. It carries out the reaction alpha-D-glucosamine 1-phosphate + acetyl-CoA = N-acetyl-alpha-D-glucosamine 1-phosphate + CoA + H(+). It catalyses the reaction N-acetyl-alpha-D-glucosamine 1-phosphate + UTP + H(+) = UDP-N-acetyl-alpha-D-glucosamine + diphosphate. The protein operates within nucleotide-sugar biosynthesis; UDP-N-acetyl-alpha-D-glucosamine biosynthesis; N-acetyl-alpha-D-glucosamine 1-phosphate from alpha-D-glucosamine 6-phosphate (route II): step 2/2. It functions in the pathway nucleotide-sugar biosynthesis; UDP-N-acetyl-alpha-D-glucosamine biosynthesis; UDP-N-acetyl-alpha-D-glucosamine from N-acetyl-alpha-D-glucosamine 1-phosphate: step 1/1. Its pathway is bacterial outer membrane biogenesis; LPS lipid A biosynthesis. In terms of biological role, catalyzes the last two sequential reactions in the de novo biosynthetic pathway for UDP-N-acetylglucosamine (UDP-GlcNAc). The C-terminal domain catalyzes the transfer of acetyl group from acetyl coenzyme A to glucosamine-1-phosphate (GlcN-1-P) to produce N-acetylglucosamine-1-phosphate (GlcNAc-1-P), which is converted into UDP-GlcNAc by the transfer of uridine 5-monophosphate (from uridine 5-triphosphate), a reaction catalyzed by the N-terminal domain. This is Bifunctional protein GlmU from Shigella boydii serotype 4 (strain Sb227).